We begin with the raw amino-acid sequence, 389 residues long: Dirigent protein 25 (389 aa).

An N-terminal signal peptide occupies residues 1 to 21 (MAGCKVLFFLILALAITFVSA). 3 stretches are compositionally biased toward low complexity: residues 50–68 (GPFP…SGTG), 77–86 (LGTNTGPGPL), and 98–135 (SSGT…PLPT). The interval 50 to 135 (GPFPTANSGP…PGSGSGPLPT (86 aa)) is disordered.

Belongs to the plant dirigent protein family. As to quaternary structure, homodimer.

The protein resides in the secreted. It localises to the extracellular space. The protein localises to the apoplast. In terms of biological role, dirigent proteins impart stereoselectivity on the phenoxy radical-coupling reaction, yielding optically active lignans from two molecules of coniferyl alcohol in the biosynthesis of lignans, flavonolignans, and alkaloids and thus plays a central role in plant secondary metabolism. The chain is Dirigent protein 25 (DIR25) from Arabidopsis thaliana (Mouse-ear cress).